Consider the following 434-residue polypeptide: MSILRIHAREIFDSRGNPTVEVDLYTAKGLFRAAVPSGASTGIYEALELRDNDKTRFMGKGVSQAVEHINKTIAPALVSKKVNVVEQEKIDKLMIEMDGTENKSKFGANAILGVSLAVCKAGAVEKGVPLYRHIADLAGNPEVILPVPAFNVINGGSHAGNKLAMQEFMILPVGASSFREAMRIGAEVYHNLKNVIKEKYGKDATNVGDEGGFAPNILENKEALELLKTAIAKAGYTDQVVIGMDVAASEFYRSGKYDLDFKSPDDPSRYITPDQLADLYKSFVQNYPVVSIEDPFDQDDWGAWQKFTASAGIQVVGDDLTVTNPKRIAKAASEKSCNCLLLKVNQIGSVTESLQACKLAQSNGWGVMVSHRSGETEDTFIADLVVGLCTGQIKTGAPCRSERLAKYNQILRIEEELGSKAKFAGRSFRNPLAK.

N-acetylserine is present on Ser2. Ser40 contributes to the Mg(2+) binding site. Tyr44 carries the phosphotyrosine modification. An N6-acetyllysine; alternate modification is found at Lys60. Lys60 is subject to N6-succinyllysine; alternate. N6-acetyllysine is present on Lys71. Lys89 is modified (N6-acetyllysine; alternate). Residue Lys89 is modified to N6-succinyllysine; alternate. Lys92 and Lys126 each carry N6-acetyllysine. 2 residues coordinate substrate: His158 and Glu167. N6-acetyllysine is present on residues Lys193 and Lys199. Position 202 is an N6-acetyllysine; alternate (Lys202). Residue Lys202 forms a Glycyl lysine isopeptide (Lys-Gly) (interchain with G-Cter in SUMO2); alternate linkage. The active-site Proton donor is the Glu210. 2 positions are modified to N6-acetyllysine; alternate: Lys228 and Lys233. The residue at position 228 (Lys228) is an N6-succinyllysine; alternate. N6-(2-hydroxyisobutyryl)lysine; alternate is present on Lys228. Lys233 is modified (N6-malonyllysine; alternate). Position 245 (Asp245) interacts with Mg(2+). Ser254 carries the post-translational modification Phosphoserine. Lys256 is modified (N6-acetyllysine). Ser263 is subject to Phosphoserine. Residue Lys281 is modified to N6-acetyllysine; alternate. Position 281 is an N6-(2-hydroxyisobutyryl)lysine; alternate (Lys281). Tyr287 is subject to Phosphotyrosine. Ser291 bears the Phosphoserine mark. Mg(2+) contacts are provided by Glu293 and Asp318. Residues Glu293 and Asp318 each contribute to the substrate site. 2 positions are modified to N6-acetyllysine: Lys335 and Lys343. The Proton acceptor role is filled by Lys343. Substrate contacts are provided by residues 370-373 (SHRS) and Lys394. Residues 405–434 (AKYNQILRIEEELGSKAKFAGRSFRNPLAK) are required for interaction with PLG. Lys406 is modified (N6-acetyllysine). Residue Lys420 is modified to N6-acetyllysine; alternate. Lys420 carries the N6-succinyllysine; alternate modification. Lys420 carries the post-translational modification N6-malonyllysine; alternate.

The protein belongs to the enolase family. In terms of assembly, mammalian enolase is composed of 3 isozyme subunits, alpha, beta and gamma, which can form homodimers or heterodimers which are cell-type and development-specific. ENO1 interacts with PLG in the neuronal plasma membrane and promotes its activation. The C-terminal lysine is required for this binding. In vitro, interacts with several glycolytic enzymes including PKM, PGM, CKM and aldolase. Also binds troponin, in vitro. Interacts with ENO4 and PGAM2. Interacts with CMTM6. It depends on Mg(2+) as a cofactor. In terms of processing, ISGylated. Lysine 2-hydroxyisobutyrylation (Khib) by p300/EP300 activates the phosphopyruvate hydratase activity. In terms of tissue distribution, testis. Found in the principal piece of sperm tail (at protein level). The alpha/alpha homodimer is expressed in embryo and in most adult tissues. The alpha/beta heterodimer and the beta/beta homodimer are found in striated muscle, and the alpha/gamma heterodimer and the gamma/gamma homodimer in neurons. In striated muscle, expression of ENO1 appears to be independent of fiber type.

The protein resides in the cytoplasm. The protein localises to the cell membrane. It carries out the reaction (2R)-2-phosphoglycerate = phosphoenolpyruvate + H2O. It functions in the pathway carbohydrate degradation; glycolysis; pyruvate from D-glyceraldehyde 3-phosphate: step 4/5. Its function is as follows. Glycolytic enzyme the catalyzes the conversion of 2-phosphoglycerate to phosphoenolpyruvate. In addition to glycolysis, involved in various processes such as growth control, hypoxia tolerance and allergic responses. May also function in the intravascular and pericellular fibrinolytic system due to its ability to serve as a receptor and activator of plasminogen on the cell surface of several cell-types such as leukocytes and neurons. Stimulates immunoglobulin production. The protein is Alpha-enolase (Eno1) of Mus musculus (Mouse).